Reading from the N-terminus, the 453-residue chain is GTPase Der (453 aa).

EngA-type G domains follow at residues 4–169 (PIVA…PTQG) and 177–352 (TKIA…NEYQ). Residues 10-17 (GRPNVGKS), 57-61 (DTGGL), 120-123 (NKCE), 183-190 (GRPNVGKS), 230-234 (DTAGI), and 295-298 (NKWD) contribute to the GTP site. The 86-residue stretch at 353-438 (RRVTTSVINE…PIRLLWRGKK (86 aa)) folds into the KH-like domain.

The protein belongs to the TRAFAC class TrmE-Era-EngA-EngB-Septin-like GTPase superfamily. EngA (Der) GTPase family. In terms of assembly, associates with the 50S ribosomal subunit.

In terms of biological role, GTPase that plays an essential role in the late steps of ribosome biogenesis. The chain is GTPase Der from Trichodesmium erythraeum (strain IMS101).